Reading from the N-terminus, the 590-residue chain is Protein Spindly (590 aa).

The stretch at 1–401 (MSDLEDEIKV…SMARMKALSE (401 aa)) forms a coiled coil. The tract at residues 446–590 (NKAQVQKRRR…KTMANECAQQ (145 aa)) is disordered. 2 stretches are compositionally biased toward basic and acidic residues: residues 483–497 (SNEK…HPVE) and 518–527 (RESKSVRICE). 2 stretches are compositionally biased toward polar residues: residues 541-554 (VNDS…QTHQ) and 572-590 (QQPT…CAQQ).

The protein belongs to the Spindly family.

Its subcellular location is the chromosome. The protein resides in the centromere. The protein localises to the kinetochore. Required for the localization of dynein and dynactin to the mitotic kintochore. Dynein is believed to control the initial lateral interaction between the kinetochore and spindle microtubules and to facilitate the subsequent formation of end-on kinetochore-microtubule attachments mediated by the NDC80 complex. May act as an adapter protein linking the dynein motor complex to various cargos. This is Protein Spindly (spdl1) from Danio rerio (Zebrafish).